A 366-amino-acid polypeptide reads, in one-letter code: Tudor domain-containing protein 10 (366 aa).

An RRM domain is found at 34–107 (TEVYVGNLPL…RKLFVNTSKR (74 aa)). The Tudor domain maps to 210-317 (FWAMHVTEAL…PLTQPFMLEK (108 aa)). Positions 216–237 (TEALHQNMQALFSTLAQAEEQQ) form a coiled coil.

This is Tudor domain-containing protein 10 (TDRD10) from Homo sapiens (Human).